A 130-amino-acid chain; its full sequence is Small ribosomal subunit protein uS11 (130 aa).

The protein belongs to the universal ribosomal protein uS11 family. Part of the 30S ribosomal subunit. Interacts with proteins S7 and S18. Binds to IF-3.

Functionally, located on the platform of the 30S subunit, it bridges several disparate RNA helices of the 16S rRNA. Forms part of the Shine-Dalgarno cleft in the 70S ribosome. This Prochlorococcus marinus (strain MIT 9301) protein is Small ribosomal subunit protein uS11.